The chain runs to 407 residues: Zinc finger protein 260 (407 aa).

The tract at residues 1 to 21 (MLESLQPESELLHDEPDPGEK) is disordered. Residues 10 to 21 (ELLHDEPDPGEK) are compositionally biased toward basic and acidic residues. A C2H2-type 1 zinc finger spans residues 23 to 45 (YECDECRKTFSLEQHFVEHKKTH). Residues 51–73 (PECTGCGEEFSKASSLTRHLRSR) form a C2H2-type 2; degenerate zinc finger. 11 C2H2-type zinc fingers span residues 79 to 101 (YKCG…QKQH), 131 to 153 (YACK…EKIH), 159 to 181 (FECN…QNVH), 187 to 209 (FKCN…QRIH), 215 to 237 (YECK…QRSH), 243 to 265 (YTCK…EKIH), 271 to 293 (YKCN…HNIH), 299 to 321 (YECN…VRIH), 327 to 349 (YECK…MRSH), 355 to 377 (YGCN…MRIH), and 383 to 405 (YQCS…QRIH).

The protein belongs to the krueppel C2H2-type zinc-finger protein family. As to quaternary structure, binds DNA. Interacts with GATA4. Expressed in both embryonic, fetal and adult heart. Also expressed in lung, skeletal muscle and adrenal glands.

The protein localises to the nucleus. Its function is as follows. Transcription factor that acts as a cardiac regulator and an effector of alpha1-adrenergic signaling. Binds to PE response elements (PERE) present in the promoter of genes such as ANF/NPPA and acts as a direct transcriptional activator of NPPA. Also acts as a cofactor with GATA4, a key cardiac regulator. The chain is Zinc finger protein 260 (Znf260) from Rattus norvegicus (Rat).